Consider the following 326-residue polypeptide: Beta-ketoacyl-[acyl-carrier-protein] synthase III (326 aa).

Catalysis depends on residues Cys112 and His251. The interval 252 to 256 (QANSR) is ACP-binding. The active site involves Asn281.

The protein belongs to the thiolase-like superfamily. FabH family. Homodimer.

Its subcellular location is the cytoplasm. It catalyses the reaction malonyl-[ACP] + acetyl-CoA + H(+) = 3-oxobutanoyl-[ACP] + CO2 + CoA. The protein operates within lipid metabolism; fatty acid biosynthesis. Catalyzes the condensation reaction of fatty acid synthesis by the addition to an acyl acceptor of two carbons from malonyl-ACP. Catalyzes the first condensation reaction which initiates fatty acid synthesis and may therefore play a role in governing the total rate of fatty acid production. Possesses both acetoacetyl-ACP synthase and acetyl transacylase activities. Its substrate specificity determines the biosynthesis of branched-chain and/or straight-chain of fatty acids. The protein is Beta-ketoacyl-[acyl-carrier-protein] synthase III of Clostridium botulinum (strain Loch Maree / Type A3).